A 261-amino-acid polypeptide reads, in one-letter code: Indole-3-glycerol phosphate synthase (261 aa).

The protein belongs to the TrpC family.

The enzyme catalyses 1-(2-carboxyphenylamino)-1-deoxy-D-ribulose 5-phosphate + H(+) = (1S,2R)-1-C-(indol-3-yl)glycerol 3-phosphate + CO2 + H2O. The protein operates within amino-acid biosynthesis; L-tryptophan biosynthesis; L-tryptophan from chorismate: step 4/5. The protein is Indole-3-glycerol phosphate synthase of Burkholderia ambifaria (strain MC40-6).